The primary structure comprises 146 residues: Hemoglobin subunit beta-2 (146 aa).

In terms of domain architecture, Globin spans 2 to 146 (KWTDKERAVI…VVSALGKQYC (145 aa)). Residues His63 and His92 each contribute to the heme b site.

It belongs to the globin family. Heterotetramer of two alpha chains and two beta chains. As to expression, red blood cells.

In terms of biological role, involved in oxygen transport from gills to the various peripheral tissues. The sequence is that of Hemoglobin subunit beta-2 (hbb2) from Lycodes reticulatus (Arctic eelpout).